The chain runs to 441 residues: MALPSNFLLGVCCFAWLCFLSSLSSQASTEESQSGASENVESEADPWSLLLPVDGTDRSGLLPPLFKVLSDRRGETPKLQPDSRALYYMKKLYKTYATKEGVPKPSRSHLYNTVRLFSPCAQQEQAPSNQVTGPLPMVDLLFNLDRVTAMEHLLKSVLLYTLNNSASSSSTVTCMCDLVVKEAMSSGRAPPRAPYSFTLKKHRWIEIDVTSLLQPLVTSSERSIHLSVNFTCTKDQVPEDGVFSMPLSVPPSLILYLNDTSTQAYHSWQSLQSTWRPLQHPGQAGVAARPVKEEAIEVERSPRRRRGQKAIRSEAKGPLLTASFNLSEYFKQFLFPQNECELHDFRLSFSQLKWDNWIVAPHRYNPRYCKGDCPRAVRHRYGSPVHTMVQNIIYEKLDPSVPRPSCVPGKYSPLSVLTIEPDGSIAYKEYEDMIATRCTCR.

A signal peptide spans 1–29 (MALPSNFLLGVCCFAWLCFLSSLSSQAST). Positions 30–306 (EESQSGASEN…EVERSPRRRR (277 aa)) are excised as a propeptide. 4 N-linked (GlcNAc...) asparagine glycosylation sites follow: asparagine 163, asparagine 229, asparagine 258, and asparagine 325. Intrachain disulfides connect cysteine 340-cysteine 406, cysteine 369-cysteine 438, and cysteine 373-cysteine 440.

It belongs to the TGF-beta family. Homodimer or heterodimer (Potential). But, in contrast to other members of this family, cannot be disulfide-linked. In terms of processing, phosphorylated; phosphorylation is critical for GDF9 function. Ovary. Strongly expressed in germinal vesicle (GV) stage oocytes, MII-stage oocytes and in zygotes.

Its subcellular location is the secreted. Functionally, required for ovarian folliculogenesis. The protein is Growth/differentiation factor 9 (Gdf9) of Mus musculus (Mouse).